The chain runs to 80 residues: Toxin-like peptide AaF1CA1 (80 aa).

A signal peptide spans 1–22; that stretch reads MMKLVLFSVIVILFSLIGSIHG. The LCN-type CS-alpha/beta domain occupies 25 to 80; it reads VPGNYPLRPFRYRYGCAVPGDSDYCVRVCRKHGVRYGYCWFFTCWCEYLEDKNIKI. 3 cysteine pairs are disulfide-bonded: Cys40–Cys63, Cys49–Cys68, and Cys53–Cys70.

Belongs to the long (3 C-C) scorpion toxin superfamily. Expressed by the venom gland.

It is found in the secreted. Probable ion channel inhibitor. The polypeptide is Toxin-like peptide AaF1CA1 (Androctonus australis (Sahara scorpion)).